The chain runs to 504 residues: ATP synthase subunit alpha, chloroplastic (504 aa).

169–176 (GDRQTGKT) lines the ATP pocket.

Belongs to the ATPase alpha/beta chains family. As to quaternary structure, F-type ATPases have 2 components, CF(1) - the catalytic core - and CF(0) - the membrane proton channel. CF(1) has five subunits: alpha(3), beta(3), gamma(1), delta(1), epsilon(1). CF(0) has four main subunits: a, b, b' and c.

Its subcellular location is the plastid. It localises to the chloroplast thylakoid membrane. It carries out the reaction ATP + H2O + 4 H(+)(in) = ADP + phosphate + 5 H(+)(out). Produces ATP from ADP in the presence of a proton gradient across the membrane. The alpha chain is a regulatory subunit. This is ATP synthase subunit alpha, chloroplastic from Stigeoclonium helveticum (Green alga).